The chain runs to 268 residues: Movement protein (268 aa).

Residues 215–243 (GKKSDVRKGKNSSSDRSVPNKNYRNVKDF) are disordered. The span at 225–237 (NSSSDRSVPNKNY) shows a compositional bias: polar residues.

It belongs to the tobamovirus movement protein family. In terms of assembly, binds to host RBCS at the plasmodesmata; this interaction seems required for viral systemic movement. In resistant plants, interacts with host MBP2C at host microtubules; this interaction prevents virus cell to cell movement. In resistant plants, interacts with host resistance (R) protein (e.g. tomato ToMV resistance protein TM-2(2), AC Q71BG9) at the host plasma membrane; this interaction triggers host defense responses leading to programmed cell death.

It is found in the host cytoplasm. The protein resides in the host cytoskeleton. It localises to the host cell junction. The protein localises to the host plasmodesma. Transports viral genome to neighboring plant cells directly through plasmosdesmata, without any budding. The movement protein allows efficient cell to cell propagation, by bypassing the host cell wall barrier. Forms a ribonucleoprotein complex with viral RNA. Binds microtubules and modulates microtubule stability. Can bind double-stranded DNA. Triggers host hypersensitive defense reaction in incompatible plants harboring resistance (R) proteins. The protein is Movement protein (MP) of Nicotiana tabacum (Common tobacco).